Here is a 416-residue protein sequence, read N- to C-terminus: Adenylosuccinate synthetase (416 aa).

Residues 12–18 (GDEGKGK) and 40–42 (GHT) each bind GTP. Asp-13 serves as the catalytic Proton acceptor. Residues Asp-13 and Gly-40 each coordinate Mg(2+). IMP is bound by residues 13–16 (DEGK), 38–41 (NAGH), Thr-125, Arg-139, Gln-220, Thr-235, and Arg-299. The active-site Proton donor is the His-41. 295–301 (TTTGRPR) provides a ligand contact to substrate. Residues Arg-301, 327-329 (KLD), and 405-407 (STS) each bind GTP.

It belongs to the adenylosuccinate synthetase family. In terms of assembly, homodimer. The cofactor is Mg(2+).

The protein localises to the cytoplasm. It carries out the reaction IMP + L-aspartate + GTP = N(6)-(1,2-dicarboxyethyl)-AMP + GDP + phosphate + 2 H(+). It participates in purine metabolism; AMP biosynthesis via de novo pathway; AMP from IMP: step 1/2. Its function is as follows. Plays an important role in the de novo pathway of purine nucleotide biosynthesis. Catalyzes the first committed step in the biosynthesis of AMP from IMP. The protein is Adenylosuccinate synthetase of Nitratiruptor sp. (strain SB155-2).